Consider the following 902-residue polypeptide: Cytosolic 10-formyltetrahydrofolate dehydrogenase (902 aa).

The segment at 1–310 is hydrolase domain; the sequence is MKIAVIGQSL…LASNFFKGAA (310 aa). Phosphoserine is present on serine 9. Lysine 38 carries the N6-succinyllysine modification. 88-90 is a (6R)-10-formyltetrahydrofolate binding site; that stretch reads QFI. The active-site Proton donor is the histidine 106. Aspartate 142 is a (6R)-10-formyltetrahydrofolate binding site. One can recognise a Carrier domain in the interval 318-395; sequence EAELVTAEAV…DFIQLLVRKL (78 aa). Serine 354 is subject to O-(pantetheine 4'-phosphoryl)serine. The aldehyde dehydrogenase domain stretch occupies residues 417 to 902; it reads TVRMPHQLFI…LRVKTVTFEY (486 aa). NADP(+)-binding positions include 571–573 and 597–600; these read IPW and KPAQ. 2 positions are modified to phosphoserine: serine 629 and serine 631. Residues 630 to 635 and 650 to 651 each bind NADP(+); these read GSLVGQ and GS. Lysine 660 is subject to N6-succinyllysine. Catalysis depends on glutamate 673, which acts as the Proton acceptor. Residue 673-674 participates in NADP(+) binding; that stretch reads EL. Cysteine 707 acts as the Proton donor in catalysis. Residue lysine 757 coordinates NADP(+). Lysine 767 is modified (N6-succinyllysine). 804–806 lines the NADP(+) pocket; it reads ESF. At serine 825 the chain carries Phosphoserine. N6-acetyllysine is present on lysine 882.

In the N-terminal section; belongs to the GART family. This sequence in the C-terminal section; belongs to the aldehyde dehydrogenase family. ALDH1L subfamily. In terms of assembly, homotetramer. Post-translationally, phosphopantetheinylation at Ser-354 by AASDHPPT is required for the formyltetrahydrofolate dehydrogenase activity. In terms of tissue distribution, highly expressed in liver, pancreas and kidney.

Its subcellular location is the cytoplasm. It localises to the cytosol. It carries out the reaction (6R)-10-formyltetrahydrofolate + NADP(+) + H2O = (6S)-5,6,7,8-tetrahydrofolate + CO2 + NADPH + H(+). Cytosolic 10-formyltetrahydrofolate dehydrogenase that catalyzes the NADP(+)-dependent conversion of 10-formyltetrahydrofolate to tetrahydrofolate and carbon dioxide. May also have an NADP(+)-dependent aldehyde dehydrogenase activity towards formaldehyde, acetaldehyde, propionaldehyde, and benzaldehyde. The polypeptide is Cytosolic 10-formyltetrahydrofolate dehydrogenase (Homo sapiens (Human)).